We begin with the raw amino-acid sequence, 114 residues long: uncharacterized protein (114 aa).

Gly-2 carries the N-myristoyl glycine; by host lipid modification. 2 consecutive transmembrane segments (helical) span residues 11 to 31 and 44 to 64; these read FGLILVGAIIFTASYLWKDLL and GLMWRSIYTILVTVILVLVAI. Residues 73–114 form a disordered region; it reads VNKDSKDPKDKSIEFDDSPIRDGSSGTPDNSNEPTDLSVETS. Over residues 75–92 the composition is skewed to basic and acidic residues; it reads KDSKDPKDKSIEFDDSPI. The segment covering 96-114 has biased composition (polar residues); sequence SSGTPDNSNEPTDLSVETS.

Its subcellular location is the membrane. This is an uncharacterized protein from Acanthamoeba polyphaga (Amoeba).